The sequence spans 124 residues: Small ribosomal subunit protein uS12 (124 aa).

The residue at position 89 (D89) is a 3-methylthioaspartic acid.

The protein belongs to the universal ribosomal protein uS12 family. In terms of assembly, part of the 30S ribosomal subunit. Contacts proteins S8 and S17. May interact with IF1 in the 30S initiation complex.

Its function is as follows. With S4 and S5 plays an important role in translational accuracy. Functionally, interacts with and stabilizes bases of the 16S rRNA that are involved in tRNA selection in the A site and with the mRNA backbone. Located at the interface of the 30S and 50S subunits, it traverses the body of the 30S subunit contacting proteins on the other side and probably holding the rRNA structure together. The combined cluster of proteins S8, S12 and S17 appears to hold together the shoulder and platform of the 30S subunit. The polypeptide is Small ribosomal subunit protein uS12 (Caldanaerobacter subterraneus subsp. tengcongensis (strain DSM 15242 / JCM 11007 / NBRC 100824 / MB4) (Thermoanaerobacter tengcongensis)).